A 258-amino-acid polypeptide reads, in one-letter code: 6-phosphogluconolactonase (258 aa).

An N-acetylalanine modification is found at Ala-2. A Phosphoserine modification is found at Ser-49. Lys-180 carries the post-translational modification N6-acetyllysine.

This sequence belongs to the glucosamine/galactosamine-6-phosphate isomerase family. 6-phosphogluconolactonase subfamily.

The protein localises to the cytoplasm. It carries out the reaction 6-phospho-D-glucono-1,5-lactone + H2O = 6-phospho-D-gluconate + H(+). It participates in carbohydrate degradation; pentose phosphate pathway; D-ribulose 5-phosphate from D-glucose 6-phosphate (oxidative stage): step 2/3. Its function is as follows. Hydrolysis of 6-phosphogluconolactone to 6-phosphogluconate. The chain is 6-phosphogluconolactonase (PGLS) from Bos taurus (Bovine).